The following is a 255-amino-acid chain: Imidazole glycerol phosphate synthase subunit HisF (255 aa).

Residues aspartate 11 and aspartate 130 contribute to the active site.

The protein belongs to the HisA/HisF family. As to quaternary structure, heterodimer of HisH and HisF.

The protein resides in the cytoplasm. The enzyme catalyses 5-[(5-phospho-1-deoxy-D-ribulos-1-ylimino)methylamino]-1-(5-phospho-beta-D-ribosyl)imidazole-4-carboxamide + L-glutamine = D-erythro-1-(imidazol-4-yl)glycerol 3-phosphate + 5-amino-1-(5-phospho-beta-D-ribosyl)imidazole-4-carboxamide + L-glutamate + H(+). It functions in the pathway amino-acid biosynthesis; L-histidine biosynthesis; L-histidine from 5-phospho-alpha-D-ribose 1-diphosphate: step 5/9. Functionally, IGPS catalyzes the conversion of PRFAR and glutamine to IGP, AICAR and glutamate. The HisF subunit catalyzes the cyclization activity that produces IGP and AICAR from PRFAR using the ammonia provided by the HisH subunit. The sequence is that of Imidazole glycerol phosphate synthase subunit HisF from Akkermansia muciniphila (strain ATCC BAA-835 / DSM 22959 / JCM 33894 / BCRC 81048 / CCUG 64013 / CIP 107961 / Muc).